The following is a 486-amino-acid chain: Argininosuccinate lyase (486 aa).

This sequence belongs to the lyase 1 family. Argininosuccinate lyase subfamily.

The protein resides in the cytoplasm. It carries out the reaction 2-(N(omega)-L-arginino)succinate = fumarate + L-arginine. Its pathway is amino-acid biosynthesis; L-arginine biosynthesis; L-arginine from L-ornithine and carbamoyl phosphate: step 3/3. The polypeptide is Argininosuccinate lyase (Acidobacterium capsulatum (strain ATCC 51196 / DSM 11244 / BCRC 80197 / JCM 7670 / NBRC 15755 / NCIMB 13165 / 161)).